The sequence spans 314 residues: Glyceraldehyde-3-phosphate dehydrogenase A, chloroplastic (314 aa).

NADP(+)-binding positions include arginine 5 to isoleucine 6, aspartate 29, and arginine 74. Cysteines 13 and 283 form a disulfide. D-glyceraldehyde 3-phosphate contacts are provided by residues serine 147 to threonine 149, threonine 178, arginine 193, threonine 206 to glycine 207, and arginine 229. Cysteine 148 serves as the catalytic Nucleophile. NADP(+) is bound at residue asparagine 311.

This sequence belongs to the glyceraldehyde-3-phosphate dehydrogenase family. In terms of assembly, homotetramer.

The protein localises to the plastid. It is found in the chloroplast. The catalysed reaction is D-glyceraldehyde 3-phosphate + phosphate + NADP(+) = (2R)-3-phospho-glyceroyl phosphate + NADPH + H(+). Its pathway is carbohydrate biosynthesis; Calvin cycle. This Scenedesmus vacuolatus (Green alga) protein is Glyceraldehyde-3-phosphate dehydrogenase A, chloroplastic (GapA).